The sequence spans 348 residues: Heat-inducible transcription repressor HrcA (348 aa).

Belongs to the HrcA family.

Its function is as follows. Negative regulator of class I heat shock genes (grpE-dnaK-dnaJ and groELS operons). Prevents heat-shock induction of these operons. The chain is Heat-inducible transcription repressor HrcA from Ruminiclostridium cellulolyticum (strain ATCC 35319 / DSM 5812 / JCM 6584 / H10) (Clostridium cellulolyticum).